A 512-amino-acid chain; its full sequence is Glutathione-binding protein GsiB (512 aa).

A signal peptide spans 1 to 26 (MARAVHRSGLVALGIATALMASCAFA).

The protein belongs to the bacterial solute-binding protein 5 family. The complex is composed of two ATP-binding proteins (GsiA), two transmembrane proteins (GsiC and GsiD) and a solute-binding protein (GsiB).

It localises to the periplasm. In terms of biological role, part of the ABC transporter complex GsiABCD involved in glutathione import. Binds glutathione. The polypeptide is Glutathione-binding protein GsiB (Escherichia coli O157:H7).